A 263-amino-acid polypeptide reads, in one-letter code: Proteasome subunit alpha (263 aa).

Residues 229-263 (AALLQDTPPDDADADADAGKKPANDGNLPPNDDKS) form a disordered region.

This sequence belongs to the peptidase T1A family. In terms of assembly, the 20S proteasome core is composed of 14 alpha and 14 beta subunits that assemble into four stacked heptameric rings, resulting in a barrel-shaped structure. The two inner rings, each composed of seven catalytic beta subunits, are sandwiched by two outer rings, each composed of seven alpha subunits. The catalytic chamber with the active sites is on the inside of the barrel. Has a gated structure, the ends of the cylinder being occluded by the N-termini of the alpha-subunits. Is capped by the proteasome-associated ATPase, ARC.

The protein localises to the cytoplasm. It functions in the pathway protein degradation; proteasomal Pup-dependent pathway. With respect to regulation, the formation of the proteasomal ATPase ARC-20S proteasome complex, likely via the docking of the C-termini of ARC into the intersubunit pockets in the alpha-rings, may trigger opening of the gate for substrate entry. Interconversion between the open-gate and close-gate conformations leads to a dynamic regulation of the 20S proteasome proteolysis activity. Its function is as follows. Component of the proteasome core, a large protease complex with broad specificity involved in protein degradation. The protein is Proteasome subunit alpha of Actinosynnema mirum (strain ATCC 29888 / DSM 43827 / JCM 3225 / NBRC 14064 / NCIMB 13271 / NRRL B-12336 / IMRU 3971 / 101).